A 193-amino-acid polypeptide reads, in one-letter code: Large ribosomal subunit protein bL25 (193 aa).

Belongs to the bacterial ribosomal protein bL25 family. CTC subfamily. In terms of assembly, part of the 50S ribosomal subunit; part of the 5S rRNA/L5/L18/L25 subcomplex. Contacts the 5S rRNA. Binds to the 5S rRNA independently of L5 and L18.

Its function is as follows. This is one of the proteins that binds to the 5S RNA in the ribosome where it forms part of the central protuberance. This Hydrogenovibrio crunogenus (strain DSM 25203 / XCL-2) (Thiomicrospira crunogena) protein is Large ribosomal subunit protein bL25.